We begin with the raw amino-acid sequence, 166 residues long: Regulatory protein RecX (166 aa).

The protein belongs to the RecX family.

It localises to the cytoplasm. Its function is as follows. Modulates RecA activity. The sequence is that of Regulatory protein RecX from Escherichia fergusonii (strain ATCC 35469 / DSM 13698 / CCUG 18766 / IAM 14443 / JCM 21226 / LMG 7866 / NBRC 102419 / NCTC 12128 / CDC 0568-73).